The primary structure comprises 317 residues: Small ribosomal subunit protein RACK1 (317 aa).

7 WD repeats span residues 13–44 (GHSGWVTQIATTPKYPDMILSASRDKSIIMWK), 61–91 (GHSHFVSDVVISSDGQFALSGAWDGTLRLWD), 103–133 (GHTKDVLSVAFSADNRQIVSGSRDKTIKLWN), 146–178 (GHTEWVSCVRFSPNSSNPIIVSCGWDKMVKVWN), 190–220 (GHTGYLNTVTVSPDGSLCASGGKDGQAMLWD), 231–260 (DSGDVINALCFSPNRYWLCAATGPSIKIWD), and 281–311 (AEPPQCTSLAWSADGQTLFAGYTDNLIRVWQ).

This sequence belongs to the WD repeat G protein beta family. Ribosomal protein RACK1 subfamily.

The protein localises to the cytoplasm. Its function is as follows. Involved in the recruitment, assembly and/or regulation of a variety of signaling molecules. Interacts with a wide variety of proteins and plays a role in many cellular processes. Required for VANGL2 membrane localization, inhibits Wnt signaling and regulates cellular polarization and oriented cell division during gastrulation. The protein is Small ribosomal subunit protein RACK1 (gnb2l1) of Oreochromis niloticus (Nile tilapia).